We begin with the raw amino-acid sequence, 294 residues long: Large ribosomal subunit protein uL2 (294 aa).

Disordered regions lie at residues 1–37 (MGIR…RPEK) and 228–294 (GSVM…RAAQ). Basic and acidic residues predominate over residues 23-37 (ELSRDENGKRPRPEK). The segment covering 264 to 285 (KTRKRNKPSNKFIVRGRRRGGR) has biased composition (basic residues).

The protein belongs to the universal ribosomal protein uL2 family. In terms of assembly, part of the 50S ribosomal subunit. Forms a bridge to the 30S subunit in the 70S ribosome.

One of the primary rRNA binding proteins. Required for association of the 30S and 50S subunits to form the 70S ribosome, for tRNA binding and peptide bond formation. It has been suggested to have peptidyltransferase activity; this is somewhat controversial. Makes several contacts with the 16S rRNA in the 70S ribosome. This Synechococcus sp. (strain JA-2-3B'a(2-13)) (Cyanobacteria bacterium Yellowstone B-Prime) protein is Large ribosomal subunit protein uL2.